The primary structure comprises 396 residues: S-adenosylmethionine synthase (396 aa).

ATP is bound at residue histidine 14. Residue aspartate 16 coordinates Mg(2+). Glutamate 42 contributes to the K(+) binding site. Residues glutamate 55 and glutamine 98 each coordinate L-methionine. The interval 98 to 108 is flexible loop; that stretch reads QSPDIALGVNK. Residues 174–176, 241–242, aspartate 250, 256–257, alanine 273, and lysine 277 contribute to the ATP site; these read DGK, RF, and RK. Aspartate 250 serves as a coordination point for L-methionine. Lysine 281 is a binding site for L-methionine.

The protein belongs to the AdoMet synthase family. In terms of assembly, homotetramer; dimer of dimers. Requires Mg(2+) as cofactor. K(+) serves as cofactor.

The protein resides in the cytoplasm. The enzyme catalyses L-methionine + ATP + H2O = S-adenosyl-L-methionine + phosphate + diphosphate. It functions in the pathway amino-acid biosynthesis; S-adenosyl-L-methionine biosynthesis; S-adenosyl-L-methionine from L-methionine: step 1/1. Functionally, catalyzes the formation of S-adenosylmethionine (AdoMet) from methionine and ATP. The overall synthetic reaction is composed of two sequential steps, AdoMet formation and the subsequent tripolyphosphate hydrolysis which occurs prior to release of AdoMet from the enzyme. This is S-adenosylmethionine synthase from Pseudothermotoga lettingae (strain ATCC BAA-301 / DSM 14385 / NBRC 107922 / TMO) (Thermotoga lettingae).